A 180-amino-acid polypeptide reads, in one-letter code: Negative modulator of initiation of replication (180 aa).

Residues 115 to 119 (RTRVY) form an interaction with DNA region.

It belongs to the SeqA family. In terms of assembly, homodimer. Polymerizes to form helical filaments.

The protein localises to the cytoplasm. Negative regulator of replication initiation, which contributes to regulation of DNA replication and ensures that replication initiation occurs exactly once per chromosome per cell cycle. Binds to pairs of hemimethylated GATC sequences in the oriC region, thus preventing assembly of replication proteins and re-initiation at newly replicated origins. Repression is relieved when the region becomes fully methylated. This is Negative modulator of initiation of replication from Aliivibrio fischeri (strain ATCC 700601 / ES114) (Vibrio fischeri).